Consider the following 66-residue polypeptide: Antimicrobial peptide Eval967 (66 aa).

Residues 1 to 22 (MKFSALLPVFFLLLAVIDYCQA) form the signal peptide. Leu-36 is subject to Leucine amide. A propeptide spanning residues 37–66 (GKRDVKTQKYVDIKRRDLDLDDMLSKLFED) is cleaved from the precursor.

This sequence belongs to the non-disulfide-bridged peptide (NDBP) superfamily. Short antimicrobial peptide (group 4) family. In terms of tissue distribution, expressed by the venom gland.

Its subcellular location is the secreted. Probable antimicrobial peptide. Has no inhibitory activity against herpes simplex virus type 1 (HSV-1). The sequence is that of Antimicrobial peptide Eval967 from Euscorpiops validus (Scorpion).